We begin with the raw amino-acid sequence, 98 residues long: NADH-ubiquinone oxidoreductase chain 4L (98 aa).

3 helical membrane-spanning segments follow: residues 1–21, 29–49, and 61–81; these read MSLTYMNMFMAFTISLLGLLM, SLLCLEGMMLSLFVMMTMAIL, and IILLVFAACEAALGLSLLVMV.

Belongs to the complex I subunit 4L family. In terms of assembly, core subunit of respiratory chain NADH dehydrogenase (Complex I) which is composed of 45 different subunits.

It localises to the mitochondrion inner membrane. The catalysed reaction is a ubiquinone + NADH + 5 H(+)(in) = a ubiquinol + NAD(+) + 4 H(+)(out). In terms of biological role, core subunit of the mitochondrial membrane respiratory chain NADH dehydrogenase (Complex I) which catalyzes electron transfer from NADH through the respiratory chain, using ubiquinone as an electron acceptor. Part of the enzyme membrane arm which is embedded in the lipid bilayer and involved in proton translocation. This chain is NADH-ubiquinone oxidoreductase chain 4L (MT-ND4L), found in Vampyressa melissa (Melissa's yellow-eared bat).